A 532-amino-acid polypeptide reads, in one-letter code: Bone morphogenetic protein receptor type-1A (532 aa).

Positions 1–23 are cleaved as a signal peptide; that stretch reads MTQLYTYIRLLGACLFIISHVQG. At 24–152 the chain is on the extracellular side; that stretch reads QNLDSMLHGT…IGPFFDGSVR (129 aa). 3 disulfides stabilise this stretch: Cys-61–Cys-82, Cys-63–Cys-67, and Cys-76–Cys-100. Asn-73 is a glycosylation site (N-linked (GlcNAc...) asparagine). The mediates specificity for BMP ligand stretch occupies residues 107 to 109; sequence DFQ. 2 disulfide bridges follow: Cys-110–Cys-124 and Cys-125–Cys-130. Residues 153-176 form a helical membrane-spanning segment; the sequence is WLAVLISMAVCIVAMIVFSSCFCY. Residues 177-532 are Cytoplasmic-facing; that stretch reads KHYCKSISSR…KMVESQDVKI (356 aa). The GS domain maps to 204–233; the sequence is ESLKDLIDQSQSSGSGSGLPLLVQRTIAKQ. The 292-residue stretch at 234 to 525 folds into the Protein kinase domain; it reads IQMVRQVGKG…RIKKTLAKMV (292 aa). Residues 240-248 and Lys-261 contribute to the ATP site; that span reads VGKGRYGEV. Asp-362 serves as the catalytic Proton acceptor.

The protein belongs to the protein kinase superfamily. TKL Ser/Thr protein kinase family. TGFB receptor subfamily. In terms of assembly, interacts with low affinity with GDF5; positively regulates chondrocyte differentiation. Interacts with BMP4. Interacts with SCUBE3. Interacts with TSC22D1/TSC-22. Interacts with BMP2; the interaction may induce HAMP expression. Interacts with BMP6. Interacts with heterodimers composed of BMP2 and BMP6 in vitro; the interaction may induce HAMP expression. Mg(2+) is required as a cofactor. Mn(2+) serves as cofactor. Glycosylated.

It is found in the cell membrane. Its subcellular location is the cell surface. It catalyses the reaction L-threonyl-[receptor-protein] + ATP = O-phospho-L-threonyl-[receptor-protein] + ADP + H(+). It carries out the reaction L-seryl-[receptor-protein] + ATP = O-phospho-L-seryl-[receptor-protein] + ADP + H(+). On ligand binding, forms a receptor complex consisting of two type II and two type I transmembrane serine/threonine kinases. Type II receptors phosphorylate and activate type I receptors which autophosphorylate, then bind and activate SMAD transcriptional regulators. Receptor for BMP2, BMP4, GDF5 and GDF6. Positively regulates chondrocyte differentiation through GDF5 interaction. Mediates induction of adipogenesis by GDF6. May promote the expression of HAMP, potentially via its interaction with BMP2. This Rattus norvegicus (Rat) protein is Bone morphogenetic protein receptor type-1A (Bmpr1a).